The primary structure comprises 948 residues: Phosphatidylinositol-glycan-specific phospholipase D (948 aa).

The first 24 residues, 1–24, serve as a signal peptide directing secretion; it reads MKNKIILLWLLLIVILCTISNVKG. Residues N39, N78, N148, N300, N433, N452, N506, and N535 are each glycosylated (N-linked (GlcNAc...) asparagine). FG-GAP repeat units follow at residues 451-512, 526-588, 596-656, and 663-724; these read TNFT…SVTI, QVAT…NPAG, LPSI…RISG, and DADY…LNSF. N-linked (GlcNAc...) asparagine glycans are attached at residues N749 and N788. FG-GAP repeat units follow at residues 799–861 and 895–948; these read NLLL…LTND and SSGG…NIFQ.

This sequence belongs to the GPLD1 family. Ca(2+) is required as a cofactor.

It localises to the secreted. The catalysed reaction is a 6-(alpha-D-glucosaminyl)-1-(1,2-diacyl-sn-glycero-3-phospho)-1D-myo-inositol + H2O = 6-(alpha-D-glucosaminyl)-1D-myo-inositol + a 1,2-diacyl-sn-glycero-3-phosphate + H(+). Its function is as follows. Hydrolyzes the inositol phosphate linkage in proteins anchored by phosphatidylinositol glycans (GPI-anchor) thus releasing these proteins from the membrane. May also cleave GPI anchor intermediates intracellularly. The polypeptide is Phosphatidylinositol-glycan-specific phospholipase D (pldG) (Dictyostelium discoideum (Social amoeba)).